A 123-amino-acid chain; its full sequence is Small ribosomal subunit protein uS12c (123 aa).

A disordered region spans residues 103-123 (AAGVKNRKQSRSKYGAKKPKE). Residues 107 to 123 (KNRKQSRSKYGAKKPKE) show a composition bias toward basic residues.

The protein belongs to the universal ribosomal protein uS12 family. In terms of assembly, part of the 30S ribosomal subunit.

The protein localises to the plastid. Its subcellular location is the chloroplast. Its function is as follows. With S4 and S5 plays an important role in translational accuracy. Located at the interface of the 30S and 50S subunits. The polypeptide is Small ribosomal subunit protein uS12c (rps12) (Guillardia theta (Cryptophyte)).